The following is a 391-amino-acid chain: 2-deoxy-scyllo-inosose synthase (391 aa).

NAD(+)-binding positions include aspartate 42, 73–76 (EVHK), 105–109 (GVTGN), 129–130 (TT), 140–142 (SLK), and 151–152 (KN). Lysine 142 is a catalytic residue. A Co(2+)-binding site is contributed by glutamate 184. Glutamate 244 is an active-site residue. Residues histidine 247 and histidine 263 each contribute to the Co(2+) site.

This sequence belongs to the sugar phosphate cyclases superfamily. DOI synthase family. NAD(+) serves as cofactor. Requires Co(2+) as cofactor.

It catalyses the reaction D-glucose 6-phosphate = 2-deoxy-L-scyllo-inosose + phosphate. It functions in the pathway metabolic intermediate biosynthesis; 2-deoxystreptamine biosynthesis; 2-deoxystreptamine from D-glucose 6-phosphate: step 1/4. Its pathway is antibiotic biosynthesis; ribostamycin biosynthesis. Catalyzes the intramolecular carbocycle formation from D-glucose-6-phosphate to 2-deoxy-scyllo-inosose (DOI). The chain is 2-deoxy-scyllo-inosose synthase (rbmA) from Streptomyces ribosidificus.